Consider the following 395-residue polypeptide: MAKEHFNRSKPHVNVGTIGHVDHGKTTLTAAITTVLAKRGLSELRSFDSIDNAPEEKERGITINTSHVEYQTANRHYAHVDCPGHADYVKNMVAGAAQMDGAIIVVAATDGPMPQTREHILLARQVNVPRLVVFMNKCDMVDDEEMLELVEMDMRELLSFYDFDGDNTPIIRGSALGALNGEPQWEDKVMELMEAVDNWVPLPERDIDKPFLMPVEDVFSITGRGTVATGRIETGIVKTGDEVQIIGLGAEGMKSVVTGVEMFRKILDEGQAGDNVGLLLRGIDKDQIKRGMVISHPGKITPHKRFKAEVYILKKEEGGRHTPFHNKYRPQFYIRTLDVTGEITLPEGTEMVMPGDNVTITVELIYPVACNVGLRFAIREGGRTVGAGQITELID.

Residues 10–204 form the tr-type G domain; that stretch reads KPHVNVGTIG…AVDNWVPLPE (195 aa). The segment at 19 to 26 is G1; sequence GHVDHGKT. 19-26 serves as a coordination point for GTP; the sequence is GHVDHGKT. A Mg(2+)-binding site is contributed by Thr26. The interval 60–64 is G2; it reads GITIN. The tract at residues 81–84 is G3; the sequence is DCPG. GTP contacts are provided by residues 81–85 and 136–139; these read DCPGH and NKCD. Residues 136–139 are G4; it reads NKCD. Residues 174–176 are G5; that stretch reads SAL.

Belongs to the TRAFAC class translation factor GTPase superfamily. Classic translation factor GTPase family. EF-Tu/EF-1A subfamily. As to quaternary structure, monomer.

It is found in the cytoplasm. The catalysed reaction is GTP + H2O = GDP + phosphate + H(+). GTP hydrolase that promotes the GTP-dependent binding of aminoacyl-tRNA to the A-site of ribosomes during protein biosynthesis. The sequence is that of Elongation factor Tu from Porphyromonas gingivalis (strain ATCC 33277 / DSM 20709 / CIP 103683 / JCM 12257 / NCTC 11834 / 2561).